A 27-amino-acid polypeptide reads, in one-letter code: C-reactive protein P1 (27 aa).

A disordered region spans residues 1 to 27 (IPQDLSGKMLTFPKEEDDDDVKLMTPK). Residues 6–27 (SGKMLTFPKEEDDDDVKLMTPK) form the Pentraxin (PTX) domain.

Belongs to the pentraxin family. In terms of assembly, homopentamer. Pentraxin (or pentaxin) have a discoid arrangement of 5 non-covalently bound subunits. Exists as a dimer under reducing conditions. The cofactor is Ca(2+). Glycosylated.

It is found in the secreted. In terms of biological role, displays several functions associated with host defense: it promotes agglutination, bacterial capsular swelling, phagocytosis, and complement fixation through its calcium-dependent binding to phosphorylcholine. The sequence is that of C-reactive protein P1 from Gadus morhua (Atlantic cod).